Consider the following 394-residue polypeptide: Phosphoglycerate kinase (394 aa).

Residues 21–23 (DFN), R36, 59–62 (HMGR), R118, and R151 each bind substrate. ATP contacts are provided by residues K202, E324, and 350–353 (GGDS).

It belongs to the phosphoglycerate kinase family. Monomer.

It is found in the cytoplasm. It catalyses the reaction (2R)-3-phosphoglycerate + ATP = (2R)-3-phospho-glyceroyl phosphate + ADP. The protein operates within carbohydrate degradation; glycolysis; pyruvate from D-glyceraldehyde 3-phosphate: step 2/5. The protein is Phosphoglycerate kinase of Exiguobacterium sibiricum (strain DSM 17290 / CCUG 55495 / CIP 109462 / JCM 13490 / 255-15).